A 458-amino-acid polypeptide reads, in one-letter code: Argininosuccinate lyase (458 aa).

It belongs to the lyase 1 family. Argininosuccinate lyase subfamily.

Its subcellular location is the cytoplasm. The enzyme catalyses 2-(N(omega)-L-arginino)succinate = fumarate + L-arginine. It functions in the pathway amino-acid biosynthesis; L-arginine biosynthesis; L-arginine from L-ornithine and carbamoyl phosphate: step 3/3. The polypeptide is Argininosuccinate lyase (Vibrio cholerae serotype O1 (strain ATCC 39541 / Classical Ogawa 395 / O395)).